The primary structure comprises 249 residues: Adenylate kinase (249 aa).

43-48 contacts ATP; it reads GAGKGT. Residues 63–92 are NMP; it reads ATGDMLRAQVAAKSALGVEAKKIMDQGGLV. AMP is bound by residues Thr-64, Arg-69, 90–92, 119–122, and Gln-126; these read GLV and GFPR. Positions 160-197 are LID; the sequence is GRLVHPASGRSYHKLFNPPKKDMIDDVSGDALVQRSDD. Residues Arg-161 and 170 to 171 contribute to the ATP site; that span reads SY. 2 residues coordinate AMP: Arg-194 and Arg-205. Residue Gln-233 coordinates ATP.

Belongs to the adenylate kinase family. AK2 subfamily. In terms of assembly, monomer.

The protein localises to the cytoplasm. It localises to the cytosol. The protein resides in the mitochondrion intermembrane space. The enzyme catalyses AMP + ATP = 2 ADP. Catalyzes the reversible transfer of the terminal phosphate group between ATP and AMP. Plays an important role in cellular energy homeostasis and in adenine nucleotide metabolism. Adenylate kinase activity is critical for regulation of the phosphate utilization and the AMP de novo biosynthesis pathways. The polypeptide is Adenylate kinase (Debaryomyces hansenii (strain ATCC 36239 / CBS 767 / BCRC 21394 / JCM 1990 / NBRC 0083 / IGC 2968) (Yeast)).